The sequence spans 379 residues: 2-dehydropantoate 2-reductase (379 aa).

Residues 13 to 18 (GLGAMG) and Asn119 each bind NADP(+). Asn119 provides a ligand contact to substrate. The active-site Proton donor is Lys224. Residues Asn228, Asn232, and Ser316 each coordinate substrate. Position 328 (Glu328) interacts with NADP(+).

It belongs to the ketopantoate reductase family.

It carries out the reaction (R)-pantoate + NADP(+) = 2-dehydropantoate + NADPH + H(+). It participates in cofactor biosynthesis; (R)-pantothenate biosynthesis; (R)-pantoate from 3-methyl-2-oxobutanoate: step 2/2. Functionally, catalyzes the NADPH-dependent reduction of ketopantoate into pantoic acid. The polypeptide is 2-dehydropantoate 2-reductase (PAN5) (Saccharomyces cerevisiae (strain ATCC 204508 / S288c) (Baker's yeast)).